Consider the following 586-residue polypeptide: Protein cereblon (586 aa).

Disordered stretches follow at residues 1–114 (MDDE…LPRW) and 158–194 (SQER…IDIG). A compositionally biased stretch (basic and acidic residues) spans 14–37 (GRDEDVQLEDHSQAQGLQDRRVDA). The span at 75–85 (MVEDGLQDDTA) shows a compositional bias: acidic residues. The segment covering 86 to 96 (SEGSHPSSDMS) has biased composition (polar residues). The span at 159–168 (QERRRSRTSE) shows a compositional bias: basic and acidic residues. Residues 170–179 (TSQEDVEQPE) show a composition bias toward acidic residues. A compositionally biased stretch (pro residues) spans 180–190 (DPPPQQPPRPP). Residues 226-452 (HMLIFLHQHI…LIKSTFTDES (227 aa)) form the Lon N-terminal domain. The region spanning 451-560 (ESLFFCRYCN…LAGSSVRIGK (110 aa)) is the CULT domain. Residues Cys456, Cys459, Cys525, and Cys528 each contribute to the Zn(2+) site.

This sequence belongs to the CRBN family. Likely a component of a DCX (DDB1-CUL4-X-box) protein ligase complex. May interact with pic/DDB1. In terms of processing, ubiquitinated.

The protein localises to the nucleus. It functions in the pathway protein modification; protein ubiquitination. Its function is as follows. Substrate recognition component of a DCX (DDB1-CUL4-X-box) E3 protein ligase complex that mediates the ubiquitination and subsequent proteasomal degradation of target proteins. Has an essential role in mediating growth by negatively regulating insulin signaling. It also has a role in maintaining presynaptic function in the neuromuscular junction synapses of third-instar larvae. The protein is Protein cereblon of Drosophila erecta (Fruit fly).